Consider the following 65-residue polypeptide: uncharacterized protein (65 aa).

The protein resides in the plastid. The protein localises to the chloroplast. This is an uncharacterized protein from Guillardia theta (Cryptophyte).